Reading from the N-terminus, the 267-residue chain is Acetyl-coenzyme A carboxylase carboxyl transferase subunit beta 1 (267 aa).

In terms of domain architecture, CoA carboxyltransferase N-terminal spans 9–267 (TWQACPKCGR…NYGIGRSAHG (259 aa)). Zn(2+) contacts are provided by cysteine 13, cysteine 16, cysteine 31, and cysteine 34. The C4-type zinc-finger motif lies at 13–34 (CPKCGRHVHQRQWGTYQQCPYC).

It belongs to the AccD/PCCB family. In terms of assembly, acetyl-CoA carboxylase is a heterohexamer composed of biotin carboxyl carrier protein (AccB), biotin carboxylase (AccC) and two subunits each of ACCase subunit alpha (AccA) and ACCase subunit beta (AccD). Zn(2+) is required as a cofactor.

It is found in the cytoplasm. The catalysed reaction is N(6)-carboxybiotinyl-L-lysyl-[protein] + acetyl-CoA = N(6)-biotinyl-L-lysyl-[protein] + malonyl-CoA. Its pathway is lipid metabolism; malonyl-CoA biosynthesis; malonyl-CoA from acetyl-CoA: step 1/1. Component of the acetyl coenzyme A carboxylase (ACC) complex. Biotin carboxylase (BC) catalyzes the carboxylation of biotin on its carrier protein (BCCP) and then the CO(2) group is transferred by the transcarboxylase to acetyl-CoA to form malonyl-CoA. In Lactiplantibacillus plantarum (strain JDM1) (Lactobacillus plantarum), this protein is Acetyl-coenzyme A carboxylase carboxyl transferase subunit beta 1.